The following is a 137-amino-acid chain: Large ribosomal subunit protein uL16 (137 aa).

It belongs to the universal ribosomal protein uL16 family. In terms of assembly, part of the 50S ribosomal subunit.

Functionally, binds 23S rRNA and is also seen to make contacts with the A and possibly P site tRNAs. In Pseudomonas syringae pv. tomato (strain ATCC BAA-871 / DC3000), this protein is Large ribosomal subunit protein uL16.